We begin with the raw amino-acid sequence, 504 residues long: MTEAALVEGQVKLRDGKKWKSRWLVLRKPSPVADCLLMLVYKDKCERSKGLRERSSLTLEDICGLEPALPYEGLAHTLAIICLSQAVMLGFDSHEAMCAWDTRIRYALGEVHRFHVTVAPGTKLESGPATLHLCNDILVLARDIPPTVMGQWKLSDLRRYGAVPNGFIFEGGTRCGYWAGVFFLSSAEGEQMSFLFDCIVRGISPTKGPFGLRPVLPDPSSGGPSASEERVAQEALEALQLEKRLSLLSHSGRPGSGGDDRSLSSSSSEASHSDISASSRLTAWPEQSSSSAGTSQEGPGLVAAQGPGEAMLGASRPPLKPLRPRQLQEVGRQSSSDSGIATGSHSSYSGSFSSYAGSNLDVWRAGEEFGSLLSLPPGASAPEPRLCACPPGAAEYQVPTSLRHHYDTPRSLRQAPRDPSPASQGSSDHGSATDLGGQAPTGCPSSWLGARRRGQATEGPGSDAALPSPSPGESWEAGSPHAGPPPAFFLSCSICGGLKVKPPP.

The PH domain occupies 4 to 109 (AALVEGQVKL…WDTRIRYALG (106 aa)). The IRS-type PTB domain maps to 105 to 210 (RYALGEVHRF…RGISPTKGPF (106 aa)). Disordered stretches follow at residues 210–232 (FGLR…ERVA), 248–348 (LSHS…HSSY), and 371–483 (SLLS…PHAG). Positions 263 to 280 (LSSSSSEASHSDISASSR) are enriched in low complexity. Composition is skewed to polar residues over residues 285-297 (PEQS…TSQE), 331-341 (GRQSSSDSGIA), and 421-430 (PASQGSSDHG).

In terms of assembly, homodimer. Forms a heterotetramer composed of 2 DOK7 and 2 MUSK molecules which facilitates MUSK trans-autophosphorylation on tyrosine residue and activation. Interacts (via IRS-type PTB domain) with MUSK (via cytoplasmic part); requires MUSK phosphorylation.

It is found in the cell membrane. The protein localises to the synapse. Functionally, probable muscle-intrinsic activator of MUSK that plays an essential role in neuromuscular synaptogenesis. Acts in aneural activation of MUSK and subsequent acetylcholine receptor (AchR) clustering in myotubes. Induces autophosphorylation of MUSK. This Mus musculus (Mouse) protein is Protein Dok-7 (Dok7).